A 200-amino-acid chain; its full sequence is Recombination protein RecR (200 aa).

The C4-type zinc finger occupies 57 to 72; that stretch reads CSQCRDFTEEDTCNIC. The 96-residue stretch at 81–176 folds into the Toprim domain; the sequence is GLLCVVEMPA…KVSRIAHGIP (96 aa).

This sequence belongs to the RecR family.

Its function is as follows. May play a role in DNA repair. It seems to be involved in an RecBC-independent recombinational process of DNA repair. It may act with RecF and RecO. In Haemophilus influenzae (strain 86-028NP), this protein is Recombination protein RecR.